Consider the following 419-residue polypeptide: MAGTGSFKVTRISEGAVKPAAATPEETLPLAWVDRYPTHRGLVESMHIFRSGADAAPGVIRDALARALVFFYPLAGRIVEPEAGSPAIRCTADGVYFAEAAADCSLEDVRFLERPLLLPKEDLVPYPGDDRWGVEPHNTIMMMQITKFTCGGFVMGLRFNHASADGMGAAQFINAVGDMARGLPEPRVKPVWDREKFPNPSIKPGPLPGLPVLALDYIVLDFPTGYIDGLKAQYKAHSGKFCSGFDVLTAKLWQCRTRALNLEPGATVKLCFFASVRHLLKLDRGYYGNSIFPVKMSAPSETVLSSSVMEVVDMIRQAKERMAVEFFQFAKEETEQDPFQMTFNYESIYVSDWSKLGFAEVDYGFGPPKFAGPLVNNDFIASVVILKAPLPLDGTRMLASCVTKEHSEEFVRGMKEDLP.

Catalysis depends on proton acceptor residues H161 and D362.

This sequence belongs to the plant acyltransferase family.

Functionally, involved in the incorporation of ferulate into the cell wall. May act as arabinoxylan feruloyl transferase. This Oryza sativa subsp. japonica (Rice) protein is Acyl transferase 9.